The chain runs to 1128 residues: Transient receptor potential-gamma protein (1128 aa).

The Cytoplasmic segment spans residues M1–R325. ANK repeat units follow at residues L57 to D86 and P131 to M160. A helical membrane pass occupies residues I326–G346. Residues Q347–R403 are Extracellular-facing. Residues G404–S424 traverse the membrane as a helical segment. At E425–V444 the chain is on the cytoplasmic side. Residues I445–F465 form a helical membrane-spanning segment. The Extracellular segment spans residues Q466–L492. Residues I493–F513 traverse the membrane as a helical segment. At S514–K535 the chain is on the cytoplasmic side. The chain crosses the membrane as a helical span at residues F536–W556. Residues Y557–G629 lie on the Extracellular side of the membrane. The helical transmembrane segment at M630 to A650 threads the bilayer. At M651–G1128 the chain is on the cytoplasmic side. Disordered stretches follow at residues R865–S898 and A1064–S1111. Positions E878–A893 are enriched in low complexity. Over residues T1085–S1111 the composition is skewed to polar residues.

This sequence belongs to the transient receptor (TC 1.A.4) family. STrpC subfamily. Interacts preferentially with trpl and interacts to a lower extent with trp. Expressed predominantly in the rhabdomeres of photoreceptor cells.

Its subcellular location is the cell projection. It localises to the rhabdomere membrane. In terms of biological role, a light-sensitive calcium channel that is required for inositide-mediated Ca(2+) entry in the retina during phospholipase C (PLC)-mediated phototransduction. Forms a regulated cation channel when heteromultimerized with trpl. This Drosophila melanogaster (Fruit fly) protein is Transient receptor potential-gamma protein (Trpgamma).